The following is a 298-amino-acid chain: GTP cyclohydrolase FolE2 (298 aa).

Belongs to the GTP cyclohydrolase IV family.

The enzyme catalyses GTP + H2O = 7,8-dihydroneopterin 3'-triphosphate + formate + H(+). Its pathway is cofactor biosynthesis; 7,8-dihydroneopterin triphosphate biosynthesis; 7,8-dihydroneopterin triphosphate from GTP: step 1/1. Its function is as follows. Converts GTP to 7,8-dihydroneopterin triphosphate. This Xylella fastidiosa (strain 9a5c) protein is GTP cyclohydrolase FolE2.